Reading from the N-terminus, the 278-residue chain is Truncated FRIGIDA-like protein 1 (278 aa).

The stretch at 1-36 (MTASETIATAINQIDEKKEKLKKAFDDLQAHRSLLS) forms a coiled coil.

Belongs to the Frigida family.

In terms of biological role, truncated inactive FRIGIDA-like 1 protein. The polypeptide is Truncated FRIGIDA-like protein 1 (FRL1) (Arabidopsis thaliana (Mouse-ear cress)).